The chain runs to 588 residues: Adenine deaminase (588 aa).

This sequence belongs to the metallo-dependent hydrolases superfamily. Adenine deaminase family. In terms of assembly, homodimer. Mn(2+) is required as a cofactor.

The catalysed reaction is adenine + H2O + H(+) = hypoxanthine + NH4(+). This is Adenine deaminase from Shigella flexneri.